The sequence spans 136 residues: Prefoldin subunit alpha (136 aa).

This sequence belongs to the prefoldin subunit alpha family. As to quaternary structure, heterohexamer of two alpha and four beta subunits.

Its subcellular location is the cytoplasm. Molecular chaperone capable of stabilizing a range of proteins. Seems to fulfill an ATP-independent, HSP70-like function in archaeal de novo protein folding. The chain is Prefoldin subunit alpha from Pyrobaculum arsenaticum (strain DSM 13514 / JCM 11321 / PZ6).